We begin with the raw amino-acid sequence, 187 residues long: UPF0301 protein CT0663 (187 aa).

It belongs to the UPF0301 (AlgH) family.

The chain is UPF0301 protein CT0663 from Chlorobaculum tepidum (strain ATCC 49652 / DSM 12025 / NBRC 103806 / TLS) (Chlorobium tepidum).